Reading from the N-terminus, the 284-residue chain is 4-diphosphocytidyl-2-C-methyl-D-erythritol kinase (284 aa).

Lys13 is an active-site residue. Position 96 to 106 (Pro96 to Ser106) interacts with ATP. Asp138 is an active-site residue.

This sequence belongs to the GHMP kinase family. IspE subfamily.

The catalysed reaction is 4-CDP-2-C-methyl-D-erythritol + ATP = 4-CDP-2-C-methyl-D-erythritol 2-phosphate + ADP + H(+). The protein operates within isoprenoid biosynthesis; isopentenyl diphosphate biosynthesis via DXP pathway; isopentenyl diphosphate from 1-deoxy-D-xylulose 5-phosphate: step 3/6. In terms of biological role, catalyzes the phosphorylation of the position 2 hydroxy group of 4-diphosphocytidyl-2C-methyl-D-erythritol. The sequence is that of 4-diphosphocytidyl-2-C-methyl-D-erythritol kinase from Chromobacterium violaceum (strain ATCC 12472 / DSM 30191 / JCM 1249 / CCUG 213 / NBRC 12614 / NCIMB 9131 / NCTC 9757 / MK).